We begin with the raw amino-acid sequence, 1279 residues long: Cellulose synthase operon protein C (1279 aa).

A signal peptide spans 1 to 21; sequence MRRHTLAIAILAALASTASVA. TPR repeat units lie at residues 27 to 60, 62 to 94, 218 to 250, 306 to 339, 384 to 417, 460 to 493, 495 to 527, 606 to 639, 719 to 752, and 787 to 820; these read QSLL…SPDQ, DALY…SPVP, ADET…HPDD, VDAL…PGGA, PGAA…HPGD, ALRA…DPEN, WTRF…QPNQ, PERV…NPNP, ALGV…NPNN, and PEIL…ENAM.

The protein operates within glycan metabolism; bacterial cellulose biosynthesis. Its function is as follows. Required for maximal bacterial cellulose synthesis. The sequence is that of Cellulose synthase operon protein C (bscS) from Pseudomonas fluorescens (strain SBW25).